The primary structure comprises 45 residues: Mu-conotoxin-like Cal 12.1.2e (45 aa).

4 cysteine pairs are disulfide-bonded: Cys3–Cys16, Cys11–Cys28, Cys18–Cys33, and Cys27–Cys39. The residue at position 17 (Trp17) is a 6'-bromotryptophan. Pro23 carries the post-translational modification 4-hydroxyproline. Trp38 is subject to 6'-bromotryptophan. Residue Pro40 is modified to 4-hydroxyproline.

In terms of tissue distribution, expressed by the venom duct.

The protein resides in the secreted. In terms of biological role, mu-conotoxins block voltage-gated sodium channels. This toxin reversibly blocks voltage-gated sodium channel in cephalopods, with no alteration in the voltage dependence of sodium conductance or on the kinetics of inactivation. The protein is Mu-conotoxin-like Cal 12.1.2e of Californiconus californicus (California cone).